Here is a 368-residue protein sequence, read N- to C-terminus: MFTVNYILDLFHTINATEVQHTLMHKRPASLHEVLRLAGLLQGYKDFLSLTKQAEAFFQAGDYRSAFNTISKMWVHPQIVPALLLMECFETRELTVPYWYKSIKLRRQYIQKKNGGVRPIIVAHKGLRICMAVINRLLQSCCVSWSNQTFGFRPGFGTHHAVLHLAQKAQQMLNKQQQAVLVTFDLQAAYNSVDIKHLMQTLQLQYLPNDMKKLIWMWQHLPLAQLNAGINGLAQGYAYSPTLFAWYVDQLVGQHMDFTIYADNFAGVFLTQQDAQFAVKEAQTLLQKSGLLIAPSSIKMHLLDKNQHSELNWLGHKVLFPSCTVKLQHHQLLVNQHSPQVWTIQKWDKMLRTLGWVQLALNADWRRF.

The Reverse transcriptase domain maps to 91–318 (TRELTVPYWY…SELNWLGHKV (228 aa)).

It is found in the mitochondrion. The polypeptide is Reverse transcriptase-like protein (RTL) (Chlamydomonas reinhardtii (Chlamydomonas smithii)).